The primary structure comprises 324 residues: Glyoxylate/hydroxypyruvate reductase B (324 aa).

Active-site residues include arginine 237 and glutamate 266. The active-site Proton donor is histidine 285.

This sequence belongs to the D-isomer specific 2-hydroxyacid dehydrogenase family. GhrB subfamily. In terms of assembly, homodimer.

The protein resides in the cytoplasm. It catalyses the reaction glycolate + NADP(+) = glyoxylate + NADPH + H(+). The enzyme catalyses (R)-glycerate + NAD(+) = 3-hydroxypyruvate + NADH + H(+). The catalysed reaction is (R)-glycerate + NADP(+) = 3-hydroxypyruvate + NADPH + H(+). Its function is as follows. Catalyzes the NADPH-dependent reduction of glyoxylate and hydroxypyruvate into glycolate and glycerate, respectively. This Escherichia fergusonii (strain ATCC 35469 / DSM 13698 / CCUG 18766 / IAM 14443 / JCM 21226 / LMG 7866 / NBRC 102419 / NCTC 12128 / CDC 0568-73) protein is Glyoxylate/hydroxypyruvate reductase B.